The following is a 441-amino-acid chain: uncharacterized protein (441 aa).

Residue 78–85 participates in ATP binding; it reads GPRQAGKT.

This is an uncharacterized protein from Mycobacterium bovis (strain ATCC BAA-935 / AF2122/97).